The sequence spans 175 residues: Sec-independent protein translocase protein TatB (175 aa).

The chain crosses the membrane as a helical span at residues M1–G21. The interval S155–F175 is disordered.

The protein belongs to the TatB family. In terms of assembly, the Tat system comprises two distinct complexes: a TatABC complex, containing multiple copies of TatA, TatB and TatC subunits, and a separate TatA complex, containing only TatA subunits. Substrates initially bind to the TatABC complex, which probably triggers association of the separate TatA complex to form the active translocon.

It localises to the cell inner membrane. In terms of biological role, part of the twin-arginine translocation (Tat) system that transports large folded proteins containing a characteristic twin-arginine motif in their signal peptide across membranes. Together with TatC, TatB is part of a receptor directly interacting with Tat signal peptides. TatB may form an oligomeric binding site that transiently accommodates folded Tat precursor proteins before their translocation. The protein is Sec-independent protein translocase protein TatB of Burkholderia lata (strain ATCC 17760 / DSM 23089 / LMG 22485 / NCIMB 9086 / R18194 / 383).